A 525-amino-acid polypeptide reads, in one-letter code: Protein kinase PINOID 2 (525 aa).

Positions 1 to 27 are disordered; sequence MANSSIFYKDNESDYESSTVGPDSSRR. The 379-residue stretch at 87–465 folds into the Protein kinase domain; sequence FRLLKRLGSG…SIEIKRHEFF (379 aa). ATP-binding positions include 93–101 and K118; that span reads LGSGDIGSV. The Proton acceptor role is filled by D214. Residues 466–525 form the AGC-kinase C-terminal domain; the sequence is EGVNWALIRSIKPPWVPKEETSHKTKGDNRSVNYYLPPRFMMSRKERNEPYHVSNYFDYF.

This sequence belongs to the protein kinase superfamily. Ser/Thr protein kinase family.

It carries out the reaction L-seryl-[protein] + ATP = O-phospho-L-seryl-[protein] + ADP + H(+). It catalyses the reaction L-threonyl-[protein] + ATP = O-phospho-L-threonyl-[protein] + ADP + H(+). Its function is as follows. Serine/threonine-protein kinase involved in the regulation of auxin signaling. Plays a minor role in the regulation of cellular auxin efflux and cotyledon organogenesis. The sequence is that of Protein kinase PINOID 2 (PID2) from Arabidopsis thaliana (Mouse-ear cress).